Reading from the N-terminus, the 31-residue chain is Cyclotide psybry B (31 aa).

Positions 1-31 form a cross-link, cyclopeptide (Gly-Asn); that stretch reads GFNPCGETCWNKPTCHAPGCTCSIANICVRN. Cystine bridges form between Cys-5–Cys-20, Cys-9–Cys-22, and Cys-15–Cys-28.

This is a cyclic peptide.

Functionally, probably participates in a plant defense mechanism. This is Cyclotide psybry B from Psychotria brachyceras.